Here is a 347-residue protein sequence, read N- to C-terminus: Endo-1,4-beta-xylanase 3 (347 aa).

The first 16 residues, 1-16 (MKANVILCLLAPLVAA), serve as a signal peptide directing secretion. A propeptide spanning residues 17 to 45 (LPTETIHLDPELAALRANLTERTADLWDR) is cleaved from the precursor. Glutamine 46 carries the post-translational modification Pyrrolidone carboxylic acid. In terms of domain architecture, GH10 spans 46–345 (QASQSIDQLI…KPAYNSIVGI (300 aa)). Glutamate 176 (proton donor) is an active-site residue. The Nucleophile role is filled by glutamate 282. Residues cysteine 300 and cysteine 306 are joined by a disulfide bond.

It belongs to the glycosyl hydrolase 10 (cellulase F) family. As to quaternary structure, monomer. In terms of processing, not glycosylated.

It is found in the secreted. The enzyme catalyses Endohydrolysis of (1-&gt;4)-beta-D-xylosidic linkages in xylans.. Its pathway is glycan degradation; xylan degradation. Its function is as follows. Glycoside hydrolase involved in the hydrolysis of xylan, a major plant cell wall hemicellulose made up of 1,4-beta-linked D-xylopyranose residues. Catalyzes the endohydrolysis of the main-chain 1,4-beta-glycosidic bonds connecting the xylose subunits yielding various xylooligosaccharides and xylose. Produces xylobiose and xylotriose as the main degradation products. In Hypocrea jecorina (strain QM6a) (Trichoderma reesei), this protein is Endo-1,4-beta-xylanase 3 (xyn3).